The chain runs to 63 residues: Hirudin (63 aa).

An interaction with thrombin active site region spans residues 1–3 (VVY). 3 disulfides stabilise this stretch: Cys6–Cys14, Cys16–Cys28, and Cys22–Cys39. The interval 39–63 (CVTGEGTPGPQSHNDGDFEEPEEYL) is disordered. Residue Thr45 is glycosylated (O-linked (GalNAc...) threonine). The segment at 55–63 (DFEEPEEYL) is interaction with fibrinogen-binding exosite of thrombin. Tyr62 is subject to Sulfotyrosine.

Belongs to the protease inhibitor I14 (hirudin) family.

It localises to the secreted. Hirudin is a potent thrombin-specific protease inhibitor. It forms a stable non-covalent complex with alpha-thrombin, thereby abolishing its ability to cleave fibrinogen. This is Hirudin from Poecilobdella viridis (Indian freshwater leech).